We begin with the raw amino-acid sequence, 397 residues long: Glia-derived nexin (397 aa).

The signal sequence occupies residues 1–19; it reads MNWHFPFFILTTVTLYSVH. N-linked (GlcNAc...) asparagine glycosylation occurs at Asn-159.

It belongs to the serpin family. Most abundant in seminal vesicles.

Its subcellular location is the secreted. It localises to the extracellular space. In terms of biological role, serine protease inhibitor with activity toward thrombin, trypsin, and urokinase. Promotes neurite extension by inhibiting thrombin. Binds heparin. This is Glia-derived nexin (Serpine2) from Mus musculus (Mouse).